The chain runs to 320 residues: Olfactory receptor 2W1 (320 aa).

Residues Met1 to Met25 are Extracellular-facing. An N-linked (GlcNAc...) asparagine glycan is attached at Asn5. Residues Ile26 to Ser49 form a helical membrane-spanning segment. Residues Leu50 to Thr57 lie on the Cytoplasmic side of the membrane. The helical transmembrane segment at Pro58–Pro79 threads the bilayer. Residues Gln80–Gln100 are Extracellular-facing. A disulfide bond links Cys97 and Cys189. The chain crosses the membrane as a helical span at residues Leu101–Tyr120. Residues Asp121–His139 lie on the Cytoplasmic side of the membrane. Residues Leu140–Val158 form a helical membrane-spanning segment. The Extracellular portion of the chain corresponds to Leu159–Val195. Residues Glu196–Gly219 traverse the membrane as a helical segment. The Cytoplasmic portion of the chain corresponds to Tyr220–Lys236. A helical membrane pass occupies residues Ala237–Tyr259. The Extracellular portion of the chain corresponds to Leu260–Lys272. A helical membrane pass occupies residues Phe273–Leu292. Residues Arg293–Ser320 are Cytoplasmic-facing.

This sequence belongs to the G-protein coupled receptor 1 family.

The protein localises to the cell membrane. Functionally, odorant receptor. In Homo sapiens (Human), this protein is Olfactory receptor 2W1 (OR2W1).